Consider the following 96-residue polypeptide: MSAAPLVRAVRWYQRVLSPRKPAPTCRFSPTCSEYAAQALDRHGALKGGWLALWRVLRCNPLVPGGFDPVPEHFPARHPRPQGSPPTDHPPTDQPS.

A disordered region spans residues 68–96 (DPVPEHFPARHPRPQGSPPTDHPPTDQPS). The span at 82-96 (QGSPPTDHPPTDQPS) shows a compositional bias: pro residues.

The protein belongs to the UPF0161 family.

It localises to the cell membrane. Could be involved in insertion of integral membrane proteins into the membrane. This chain is Putative membrane protein insertion efficiency factor, found in Deinococcus radiodurans (strain ATCC 13939 / DSM 20539 / JCM 16871 / CCUG 27074 / LMG 4051 / NBRC 15346 / NCIMB 9279 / VKM B-1422 / R1).